We begin with the raw amino-acid sequence, 289 residues long: HTH-type transcriptional activator AmpR (289 aa).

The region spanning 6–63 (LPLNALRVFEVAMRQGSFTKAAIELRVTQAAVSHQVARLEDLLGTALFLRTSQGLIPT) is the HTH lysR-type domain. The segment at residues 23–42 (FTKAAIELRVTQAAVSHQVA) is a DNA-binding region (H-T-H motif).

This sequence belongs to the LysR transcriptional regulatory family.

The protein resides in the cytoplasm. Functionally, this protein is a positive regulator of gene expression of cephalosporinase (AmpC). In Rhodobacter capsulatus (Rhodopseudomonas capsulata), this protein is HTH-type transcriptional activator AmpR (ampR).